The chain runs to 277 residues: Large ribosomal subunit protein uL2 (277 aa).

The tract at residues 219 to 277 (TVRGSVMNPNDHPHGGGEGRSPIGHPSPRTPWGKPALGYKTRKNKKYSDRFIVKRRHDK) is disordered.

Belongs to the universal ribosomal protein uL2 family. In terms of assembly, part of the 50S ribosomal subunit. Forms a bridge to the 30S subunit in the 70S ribosome.

One of the primary rRNA binding proteins. Required for association of the 30S and 50S subunits to form the 70S ribosome, for tRNA binding and peptide bond formation. It has been suggested to have peptidyltransferase activity; this is somewhat controversial. Makes several contacts with the 16S rRNA in the 70S ribosome. The protein is Large ribosomal subunit protein uL2 of Clostridium botulinum (strain ATCC 19397 / Type A).